A 147-amino-acid polypeptide reads, in one-letter code: Large ribosomal subunit protein uL16 (147 aa).

Belongs to the universal ribosomal protein uL16 family. In terms of assembly, part of the 50S ribosomal subunit.

In terms of biological role, binds 23S rRNA and is also seen to make contacts with the A and possibly P site tRNAs. This chain is Large ribosomal subunit protein uL16, found in Finegoldia magna (strain ATCC 29328 / DSM 20472 / WAL 2508) (Peptostreptococcus magnus).